Here is a 382-residue protein sequence, read N- to C-terminus: 1-deoxy-D-xylulose 5-phosphate reductoisomerase (382 aa).

Residues threonine 10, glycine 11, serine 12, isoleucine 13, glycine 36, and asparagine 122 each coordinate NADPH. Position 123 (lysine 123) interacts with 1-deoxy-D-xylulose 5-phosphate. Glutamate 124 serves as a coordination point for NADPH. Aspartate 148 contributes to the Mn(2+) binding site. Residues serine 149, glutamate 150, serine 174, and histidine 197 each coordinate 1-deoxy-D-xylulose 5-phosphate. Residue glutamate 150 participates in Mn(2+) binding. Glycine 203 lines the NADPH pocket. 1-deoxy-D-xylulose 5-phosphate contacts are provided by serine 210, asparagine 215, lysine 216, and glutamate 219. Position 219 (glutamate 219) interacts with Mn(2+).

It belongs to the DXR family. The cofactor is Mg(2+). Requires Mn(2+) as cofactor.

The enzyme catalyses 2-C-methyl-D-erythritol 4-phosphate + NADP(+) = 1-deoxy-D-xylulose 5-phosphate + NADPH + H(+). The protein operates within isoprenoid biosynthesis; isopentenyl diphosphate biosynthesis via DXP pathway; isopentenyl diphosphate from 1-deoxy-D-xylulose 5-phosphate: step 1/6. Functionally, catalyzes the NADPH-dependent rearrangement and reduction of 1-deoxy-D-xylulose-5-phosphate (DXP) to 2-C-methyl-D-erythritol 4-phosphate (MEP). This chain is 1-deoxy-D-xylulose 5-phosphate reductoisomerase, found in Prosthecochloris aestuarii (strain DSM 271 / SK 413).